A 299-amino-acid polypeptide reads, in one-letter code: Biotin synthase (299 aa).

Residues 22-252 enclose the Radical SAM core domain; the sequence is TSNLKLDLCS…NVTIKIAAGR (231 aa). Positions 40, 44, and 47 each coordinate [4Fe-4S] cluster. Residues Cys116, Cys176, and Lys247 each coordinate [2Fe-2S] cluster.

The protein belongs to the radical SAM superfamily. Biotin synthase family. In terms of assembly, homodimer. It depends on [4Fe-4S] cluster as a cofactor. [2Fe-2S] cluster serves as cofactor.

The enzyme catalyses (4R,5S)-dethiobiotin + (sulfur carrier)-SH + 2 reduced [2Fe-2S]-[ferredoxin] + 2 S-adenosyl-L-methionine = (sulfur carrier)-H + biotin + 2 5'-deoxyadenosine + 2 L-methionine + 2 oxidized [2Fe-2S]-[ferredoxin]. The protein operates within cofactor biosynthesis; biotin biosynthesis; biotin from 7,8-diaminononanoate: step 2/2. Functionally, catalyzes the conversion of dethiobiotin (DTB) to biotin by the insertion of a sulfur atom into dethiobiotin via a radical-based mechanism. This Thermotoga petrophila (strain ATCC BAA-488 / DSM 13995 / JCM 10881 / RKU-1) protein is Biotin synthase.